We begin with the raw amino-acid sequence, 745 residues long: Bacteriophage N4 adsorption protein B (745 aa).

3 consecutive transmembrane segments (helical) span residues 8–28, 362–382, and 393–413; these read FATWLYGLKVIAITLAVIMFI, ISNFVSFLAMLVMIQLLLLLA, and FLSIFSGSAWLMTLLWLNFGL.

Its subcellular location is the cell inner membrane. Its function is as follows. Required for bacteriophage N4 adsorption. May be a component of the phage receptor. The chain is Bacteriophage N4 adsorption protein B (nfrB) from Escherichia coli O157:H7.